We begin with the raw amino-acid sequence, 1232 residues long: Anoctamin-8 (1232 aa).

The segment at 1–32 (MAEAASGAGGTSLEGERGKRPPPEGEPAAPAS) is disordered. At Ala2 the chain carries N-acetylalanine. The Extracellular portion of the chain corresponds to 2–244 (AEAASGAGGT…DDICDYFGVK (243 aa)). Residues 14–23 (EGERGKRPPP) are compositionally biased toward basic and acidic residues. Residues 245–265 (IAMYFAWLGFYTSAMVYPAVF) traverse the membrane as a helical segment. Over 266 to 281 (GSVLYTFTEADQTSRD) the chain is Cytoplasmic. The helical transmembrane segment at 282-302 (VSCVVFALFNVIWSTLFLEEW) threads the bilayer. Residues 303 to 356 (KRRGAELAYKWGTLDSPGEAVEEPRPQFRGVRRISPITRAEEFYYPPWKRLLFQ) lie on the Extracellular side of the membrane. A Phosphoserine modification is found at Ser318. The chain crosses the membrane as a helical span at residues 357–377 (LLVSLPLCLACLVCVFLLMLG). At 378–400 (CFQLQELVLSVKGLPRLARFLPK) the chain is on the cytoplasmic side. A helical transmembrane segment spans residues 401-421 (VMLALLVSVSAEGYKKLAIWL). The Extracellular segment spans residues 422-437 (NDMENYRLESAYEKHL). The helical transmembrane segment at 438-458 (IIKVVLFQFVNSYLSLFYIGF) threads the bilayer. Over 459–750 (YLKDMERLKE…YEDTFQDYQE (292 aa)) the chain is Cytoplasmic. Residues 524–650 (RRLEPQADEG…SPTMVEKGLE (127 aa)) are disordered. Residues 532–551 (EGGGGGSGGGGRRCLSGGCG) are compositionally biased toward gly residues. Residues 582–606 (EEDEDDEEEEDEEEEEDEEEGEEGG) show a composition bias toward acidic residues. Ser669 is modified (phosphoserine). The tract at residues 681–728 (RAGGEGRDQGPDGGPDPEPGSNSDSTRRQRRQNRSSWIDPPEEEHSPQ) is disordered. Residues 751 to 771 (MFVQFGYVVLFSSAFPLAALC) traverse the membrane as a helical segment. Residues 772 to 807 (ALVNNLIEIRSDAFKLCTGLQRPFGQRVESIGQWQK) lie on the Extracellular side of the membrane. Ser801 carries the phosphoserine; by FAM20C modification. Residues 808-828 (VMEAMGVLAIVVNCYLIGQCG) form a helical membrane-spanning segment. The Cytoplasmic segment spans residues 829 to 841 (QLQRLFPWLSPEA). The helical transmembrane segment at 842–862 (AIVSVVVLEHFALLLKYLIHV) threads the bilayer. Residues 863–1232 (AIPDIPGWVA…QAVCWPSGWH (370 aa)) are Extracellular-facing. Disordered stretches follow at residues 888–970 (RHER…GSLL), 997–1152 (LAAA…WQWD), and 1174–1232 (PPCA…SGWH). Residues 904 to 932 (RREEEERQRHAEHHARREHDSGGREEARA) are compositionally biased toward basic and acidic residues. Low complexity-rich tracts occupy residues 933 to 953 (EGSG…AKGS) and 997 to 1006 (LAAAGAGATT). Position 1020 is an asymmetric dimethylarginine; alternate (Arg1020). Residue Arg1020 is modified to Omega-N-methylarginine; alternate. Residues 1031 to 1043 (KSPETRRDSERSH) are compositionally biased toward basic and acidic residues. A compositionally biased stretch (polar residues) spans 1078–1087 (TPSSGSSRVQ). 2 stretches are compositionally biased toward pro residues: residues 1130 to 1145 (PAPP…PTPP) and 1197 to 1221 (LPPP…PSPS).

Belongs to the anoctamin family. In terms of tissue distribution, expressed in embryonic stem cells, fetal brain and neural tissues.

It is found in the cell membrane. Does not exhibit calcium-activated chloride channel (CaCC) activity. This Homo sapiens (Human) protein is Anoctamin-8 (ANO8).